We begin with the raw amino-acid sequence, 100 residues long: Small ribosomal subunit protein bS20 (100 aa).

Over residues 1–20 the composition is skewed to basic residues; it reads MASGKPKKKNPRLASGRKRV. A disordered region spans residues 1–21; that stretch reads MASGKPKKKNPRLASGRKRVR.

Belongs to the bacterial ribosomal protein bS20 family.

Functionally, binds directly to 16S ribosomal RNA. The chain is Small ribosomal subunit protein bS20 from Albidiferax ferrireducens (strain ATCC BAA-621 / DSM 15236 / T118) (Rhodoferax ferrireducens).